The sequence spans 318 residues: Methionyl-tRNA formyltransferase (318 aa).

Ser112 to Pro115 is a binding site for (6S)-5,6,7,8-tetrahydrofolate.

This sequence belongs to the Fmt family.

It catalyses the reaction L-methionyl-tRNA(fMet) + (6R)-10-formyltetrahydrofolate = N-formyl-L-methionyl-tRNA(fMet) + (6S)-5,6,7,8-tetrahydrofolate + H(+). Functionally, attaches a formyl group to the free amino group of methionyl-tRNA(fMet). The formyl group appears to play a dual role in the initiator identity of N-formylmethionyl-tRNA by promoting its recognition by IF2 and preventing the misappropriation of this tRNA by the elongation apparatus. The protein is Methionyl-tRNA formyltransferase of Shewanella sp. (strain W3-18-1).